The primary structure comprises 427 residues: 3-phosphoshikimate 1-carboxyvinyltransferase (427 aa).

Lys22, Ser23, and Arg27 together coordinate 3-phosphoshikimate. Lys22 contacts phosphoenolpyruvate. Phosphoenolpyruvate contacts are provided by Gly96 and Arg124. 3-phosphoshikimate contacts are provided by Ser169, Ser170, Gln171, Ser197, Asp313, Asn336, and Lys340. Gln171 lines the phosphoenolpyruvate pocket. Asp313 (proton acceptor) is an active-site residue. Phosphoenolpyruvate contacts are provided by Arg344, Arg386, and Lys411.

This sequence belongs to the EPSP synthase family. Monomer.

It is found in the cytoplasm. It carries out the reaction 3-phosphoshikimate + phosphoenolpyruvate = 5-O-(1-carboxyvinyl)-3-phosphoshikimate + phosphate. The protein operates within metabolic intermediate biosynthesis; chorismate biosynthesis; chorismate from D-erythrose 4-phosphate and phosphoenolpyruvate: step 6/7. In terms of biological role, catalyzes the transfer of the enolpyruvyl moiety of phosphoenolpyruvate (PEP) to the 5-hydroxyl of shikimate-3-phosphate (S3P) to produce enolpyruvyl shikimate-3-phosphate and inorganic phosphate. The sequence is that of 3-phosphoshikimate 1-carboxyvinyltransferase from Shigella sonnei.